Reading from the N-terminus, the 391-residue chain is MPIQPAFGNKDLNPQEVRKNQLISSRLSSIYERWGYEEVSPPKVERLETLTACGGISNKEIVKLVADDPIGLRPDMTASIARAASTRLAYKDRPLRLWTSGTIFKSKEDCDGKFVIEEGLQSGVELIGISDMAAEIELLYLLLDSMNQLEICSNQNPILLIGHQSILKLILSGISNDYKNKIQKYLTNYDLVETEDLDIDIEIKNKLLKVLKIRGNPSDVLDKLVNIYGSNTLFDELRRLFLIIEPISKKYGVSIQLDPTYQPHFKLYNGLIFQLICQTDYAPKVIARGGRYDDLVNSFTTSIENETGAGFSFSIDKIRELKLKVEYDDKKVARTLIAFSKSKRYEDALEKQLEIHRKGSMAMVELKPCDTKKEAEFLVNKRGFDKLVWIS.

It belongs to the class-II aminoacyl-tRNA synthetase family. HisZ subfamily. In terms of assembly, heteromultimer composed of HisG and HisZ subunits.

The protein resides in the cytoplasm. The protein operates within amino-acid biosynthesis; L-histidine biosynthesis; L-histidine from 5-phospho-alpha-D-ribose 1-diphosphate: step 1/9. Required for the first step of histidine biosynthesis. May allow the feedback regulation of ATP phosphoribosyltransferase activity by histidine. This chain is ATP phosphoribosyltransferase regulatory subunit, found in Prochlorococcus marinus (strain SARG / CCMP1375 / SS120).